The following is a 183-amino-acid chain: Helofensin-1 (183 aa).

The signal sequence occupies residues 1–26 (MQMDWLFIAVVSAIGLLSSGVPGTQG). Residues 27 to 64 (AYTTEQCRALNGTCRFYACFPKNVVIGKCDWLGWGCCA) form a C(6)C(4)C(9)C(6)CC 1; approximate repeat. One copy of the C(6)C(4)C(9)C(6)CC 2; approximate repeat lies at 65 to 101 (RTPLERCTAKKGTCTASGCTETDTDHGPCDGGAQCCQ). The stretch at 102–139 (RDPVKYCKFHGNVCGRGKCPMDHIPIGEQCMPGYPCCK) is one C(6)C(4)C(9)C(6)CC 3; approximate repeat. A C(6)C(4)C(9)C(6)CC 4; approximate repeat occupies 140–177 (RDGPAYCKSKGGKCLRRCSQIVPTDIIGVCADGVPCCK).

This sequence belongs to the beta-defensin family. Helofensin subfamily. As to expression, expressed by the mandibular venom gland.

It localises to the secreted. In terms of biological role, lethal toxin which possesses an inhibitory effect on direct electrical stimulation of the isolated hemi-diaphragm of mice. Neither hemorrhagic nor hemolytic activities are detected. Phospholipase A2 activity, proteolytic activity and arginine esterolytic activity are absent. This is Helofensin-1 from Heloderma suspectum cinctum (Banded Gila monster).